The following is a 200-amino-acid chain: NAD(P)H dehydrogenase (quinone) (200 aa).

The 188-residue stretch at 4-191 (VLVLYYSSYG…DIARYQGKHV (188 aa)) folds into the Flavodoxin-like domain. Residues 10 to 15 (SSYGHV) and 79 to 81 (TRF) contribute to the FMN site. An NAD(+)-binding site is contributed by Tyr-12. Trp-99 contributes to the substrate binding site. FMN is bound by residues 114 to 120 (STGTQHG) and His-135.

It belongs to the WrbA family. FMN is required as a cofactor.

It catalyses the reaction a quinone + NADH + H(+) = a quinol + NAD(+). The catalysed reaction is a quinone + NADPH + H(+) = a quinol + NADP(+). The sequence is that of NAD(P)H dehydrogenase (quinone) from Burkholderia orbicola (strain MC0-3).